Reading from the N-terminus, the 106-residue chain is Nucleoid-associated protein Smlt1015 (106 aa).

The disordered stretch occupies residues 81-106 (IDAESKSKMGSATAGMQLPPGMKLPF).

Belongs to the YbaB/EbfC family. As to quaternary structure, homodimer.

It is found in the cytoplasm. The protein localises to the nucleoid. Binds to DNA and alters its conformation. May be involved in regulation of gene expression, nucleoid organization and DNA protection. The chain is Nucleoid-associated protein Smlt1015 from Stenotrophomonas maltophilia (strain K279a).